The primary structure comprises 1235 residues: UPF0507 protein DEHA2G04334g (1235 aa).

The VPS9 domain maps to 323 to 487 (QNDDSDAIKI…LSSSMNDEPQ (165 aa)). Positions 1097 to 1124 (STTEADTTDTTDATDATHASPNLANSTN) are disordered. The segment covering 1100–1115 (EADTTDTTDATDATHA) has biased composition (low complexity).

The protein belongs to the UPF0507 family.

This chain is UPF0507 protein DEHA2G04334g, found in Debaryomyces hansenii (strain ATCC 36239 / CBS 767 / BCRC 21394 / JCM 1990 / NBRC 0083 / IGC 2968) (Yeast).